A 466-amino-acid chain; its full sequence is Cysteine--tRNA ligase (466 aa).

A Zn(2+)-binding site is contributed by C28. Positions 30-40 (PTVYNYIHIGN) match the 'HIGH' region motif. Residues C208, H233, and E237 each contribute to the Zn(2+) site. The 'KMSKS' region signature appears at 265–269 (KMSKS). Position 268 (K268) interacts with ATP.

Belongs to the class-I aminoacyl-tRNA synthetase family. In terms of assembly, monomer. Zn(2+) is required as a cofactor.

Its subcellular location is the cytoplasm. The enzyme catalyses tRNA(Cys) + L-cysteine + ATP = L-cysteinyl-tRNA(Cys) + AMP + diphosphate. The chain is Cysteine--tRNA ligase from Staphylococcus aureus (strain MSSA476).